The primary structure comprises 354 residues: Ferredoxin--NADP reductase (354 aa).

Residues aspartate 42, glutamine 50, tyrosine 55, isoleucine 95, phenylalanine 130, aspartate 299, and threonine 339 each coordinate FAD.

The protein belongs to the ferredoxin--NADP reductase type 2 family. In terms of assembly, homodimer. It depends on FAD as a cofactor.

The catalysed reaction is 2 reduced [2Fe-2S]-[ferredoxin] + NADP(+) + H(+) = 2 oxidized [2Fe-2S]-[ferredoxin] + NADPH. The protein is Ferredoxin--NADP reductase of Acidovorax sp. (strain JS42).